The primary structure comprises 692 residues: MSAPAQPAPGVDGGDPSQARIRVPAGTTAATAVGEAGLPRRGTPDAIVVVRDADGNLRDLSWVPDVDTDITPVAANTDDGRSVIRHSTAHVLAQAVQELFPQAKLGIGPPITDGFYYDFDVPEPFTPEDLAALEKRMRQIVKEGQLFDRRVYESTEQARAELANEPYKLELVDDKSGDAEIMEVGGDELTAYDNLNPRTRERVWGDLCRGPHIPTTKHIPAFKLTRSSAAYWRGDQKNASLQRIYGTAWESQEALDRHLEFIEEAQRRDHRKLGVELDLFSFPDEIGSGLAVFHPKGGIVRRELEDYSRRKHTEAGYQFVNSPHITKAQLFHTSGHLDWYADGMFPPMHIDAEYNADGSLRKPGQDYYLKPMNCPMHCLIFRARGRSYRELPLRLFEFGTVYRYEKSGVVHGLTRVRGLTMDDAHIFCTRDQMRDELRSLLRFVLDLLADYGLTDFYLELSTKDPEKFVGAEEVWEEATTVLAEVGAESGLELVPDPGGAAFYGPKISVQVKDALGRTWQMSTIQLDFNFPERFGLEYTAADGTRHRPVMIHRALFGSIERFFGILTEHYAGAFPAWLAPVQVVGIPVADEHVAYLEEVATQLKSHGVRAEVDASDDRMAKKIVHHTNHKVPFMVLAGDRDVAAGAVSFRFGDRTQINGVARDDAVAAIVAWIADRENAVPTAELVKVAGRE.

The interval 1–20 (MSAPAQPAPGVDGGDPSQAR) is disordered. Residues 1–74 (MSAPAQPAPG…DVDTDITPVA (74 aa)) form the TGS domain. Residues 269–575 (DHRKLGVELD…LTEHYAGAFP (307 aa)) form a catalytic region. The Zn(2+) site is built by C374, H425, and H552.

The protein belongs to the class-II aminoacyl-tRNA synthetase family. In terms of assembly, homodimer. The cofactor is Zn(2+).

It localises to the cytoplasm. The catalysed reaction is tRNA(Thr) + L-threonine + ATP = L-threonyl-tRNA(Thr) + AMP + diphosphate + H(+). Functionally, catalyzes the attachment of threonine to tRNA(Thr) in a two-step reaction: L-threonine is first activated by ATP to form Thr-AMP and then transferred to the acceptor end of tRNA(Thr). Also edits incorrectly charged L-seryl-tRNA(Thr). This Mycobacterium tuberculosis (strain CDC 1551 / Oshkosh) protein is Threonine--tRNA ligase.